Here is a 74-residue protein sequence, read N- to C-terminus: Benzylsuccinate synthase beta subunit (74 aa).

In terms of assembly, heterohexamer composed of 2 alpha subunits, 2 beta subunits and 2 gamma subunits.

It catalyses the reaction toluene + fumarate = 2-benzylsuccinate. The protein operates within xenobiotic degradation; toluene degradation. With respect to regulation, activated by the benzylsuccinate synthase activating enzyme BssD. Rapidly inactivated by oxygen. Catalyzes the addition of fumarate to the methyl group of toluene, leading to the formation of benzylsuccinate. This Thauera aromatica protein is Benzylsuccinate synthase beta subunit (bssB).